A 162-amino-acid chain; its full sequence is Protein NrdI (162 aa).

This sequence belongs to the NrdI family.

Functionally, probably involved in ribonucleotide reductase function. This chain is Protein NrdI, found in Streptococcus pyogenes serotype M3 (strain ATCC BAA-595 / MGAS315).